A 456-amino-acid chain; its full sequence is Probable tRNA(Ile)-lysidine synthase (456 aa).

30-35 (SGGVDS) serves as a coordination point for ATP.

This sequence belongs to the tRNA(Ile)-lysidine synthase family.

Its subcellular location is the cytoplasm. It carries out the reaction cytidine(34) in tRNA(Ile2) + L-lysine + ATP = lysidine(34) in tRNA(Ile2) + AMP + diphosphate + H(+). Functionally, ligates lysine onto the cytidine present at position 34 of the AUA codon-specific tRNA(Ile) that contains the anticodon CAU, in an ATP-dependent manner. Cytidine is converted to lysidine, thus changing the amino acid specificity of the tRNA from methionine to isoleucine. The chain is Probable tRNA(Ile)-lysidine synthase from Schizosaccharomyces pombe (strain 972 / ATCC 24843) (Fission yeast).